Reading from the N-terminus, the 530-residue chain is Protein P80 (530 aa).

An N-terminal signal peptide occupies residues 1 to 22; that stretch reads MKVISGLLFFILISCSLFLVQG. The chain crosses the membrane as a helical span at residues 491–511; the sequence is MLVAMTFNVALFFAVIAGVLV.

The protein belongs to the SLC31A transporter family.

The protein localises to the late endosome membrane. This chain is Protein P80 (p80), found in Dictyostelium discoideum (Social amoeba).